Consider the following 25-residue polypeptide: Cytochrome c oxidase subunit 1 (25 aa).

The protein belongs to the heme-copper respiratory oxidase family. Requires Cu(2+) as cofactor. Heme is required as a cofactor.

The protein resides in the cell inner membrane. The catalysed reaction is 4 Fe(II)-[cytochrome c] + O2 + 8 H(+)(in) = 4 Fe(III)-[cytochrome c] + 2 H2O + 4 H(+)(out). Its pathway is energy metabolism; oxidative phosphorylation. Its function is as follows. Subunit I and II form the functional core of the enzyme complex. Electrons originating in cytochrome c are transferred via heme a and Cu(A) to the binuclear center formed by heme a3 and Cu(B). This cytochrome c oxidase shows proton pump activity across the membrane in addition to the electron transfer. The chain is Cytochrome c oxidase subunit 1 (ctaD) from Paracoccus versutus (Thiobacillus versutus).